Here is a 377-residue protein sequence, read N- to C-terminus: UDP-N,N'-diacetylbacillosamine 2-epimerase (hydrolyzing) (377 aa).

It belongs to the UDP-N-acetylglucosamine 2-epimerase family.

It carries out the reaction UDP-N,N'-diacetylbacillosamine + H2O = 2,4-diacetamido-2,4,6-trideoxy-alpha-D-mannopyranose + UDP + H(+). In terms of biological role, involved in biosynthesis of legionaminic acid (5,7-diamino-3,5,7,9-tetradeoxy-D-glycero-D-galacto-non-2-ulosonic acid)(Leg), a sialic acid-like derivative that is incorporated into virulence-associated cell surface glycoconjugates such as lipopolysaccharide (LPS) which could be a key determinant in the ability of L.pneumophila to inhibit the fusion of phagosomes with lysosomes. LPS contains a majority alpha2,4-linked homomer of legionaminic acid. Catalyzes the conversion of UDP-N,N'-diacetylbacillosamine (Bac2Ac4Ac) into 2,4-diacetamido-2,4,6-trideoxymannose and UDP. The polypeptide is UDP-N,N'-diacetylbacillosamine 2-epimerase (hydrolyzing) (Legionella pneumophila subsp. pneumophila (strain Philadelphia 1 / ATCC 33152 / DSM 7513)).